A 1848-amino-acid polypeptide reads, in one-letter code: Chitin synthase E (1848 aa).

Over residues 1 to 17 the composition is skewed to low complexity; sequence MAAPSPAGGAPSHAQSS. The disordered stretch occupies residues 1–22; sequence MAAPSPAGGAPSHAQSSLPSLP. Residues 1 to 779 enclose the Myosin motor domain; that stretch reads MAAPSPAGGA…CWADLAKVGE (779 aa). 102–109 contributes to the ATP binding site; the sequence is GESGSGKT. The tract at residues 593-621 is disordered; the sequence is SSKPLRMPSMARRKTSPSSRLAFDAGDAD. The tract at residues 659–683 is actin-binding; that stretch reads LDIVNKCLSSTNLNPYFIFCLKPND. 2 helical membrane-spanning segments follow: residues 889–909 and 928–948; these read WIAL…KLFG and LIIW…PGLV. Positions 952–1040 constitute a Cytochrome b5 heme-binding domain; it reads QHVYSAAELS…LLDYRPTNIS (89 aa). N-linked (GlcNAc...) asparagine glycans are attached at residues asparagine 1038 and asparagine 1063. The helical transmembrane segment at 1200-1220 threads the bilayer; sequence FILAISVLICSIIVFKFLAAL. N-linked (GlcNAc...) asparagine glycans are attached at residues asparagine 1423, asparagine 1457, and asparagine 1563. 3 helical membrane passes run 1595–1615, 1621–1641, and 1648–1668; these read LSTV…YWLV, IPYT…LIFI, and MVGW…ALPL. The N-linked (GlcNAc...) asparagine glycan is linked to asparagine 1786. The DEK-C domain maps to 1790 to 1845; the sequence is LPSDDAILAEIREILRTADLMSVTKKSIKLELERRFGVNLDLKRPYINSATEAVLA.

This sequence in the N-terminal section; belongs to the TRAFAC class myosin-kinesin ATPase superfamily. Myosin family. It in the C-terminal section; belongs to the chitin synthase family. Class V subfamily.

The protein resides in the cell membrane. It localises to the cell septum. Its subcellular location is the cell tip. The catalysed reaction is [(1-&gt;4)-N-acetyl-beta-D-glucosaminyl](n) + UDP-N-acetyl-alpha-D-glucosamine = [(1-&gt;4)-N-acetyl-beta-D-glucosaminyl](n+1) + UDP + H(+). Functionally, polymerizes chitin, a structural polymer of the cell wall and septum, by transferring the sugar moiety of UDP-GlcNAc to the non-reducing end of the growing chitin polymer. Important for hyphal growth and conidiophore development but not pathogenicity. The polypeptide is Chitin synthase E (Aspergillus fumigatus (strain ATCC MYA-4609 / CBS 101355 / FGSC A1100 / Af293) (Neosartorya fumigata)).